The sequence spans 127 residues: Protein ApaG (127 aa).

The region spanning 3-127 (KDKRYAFSVK…FQLNMPRVLH (125 aa)) is the ApaG domain.

This is Protein ApaG from Methylobacillus flagellatus (strain ATCC 51484 / DSM 6875 / VKM B-1610 / KT).